A 371-amino-acid chain; its full sequence is tRNA-specific 2-thiouridylase MnmA (371 aa).

ATP is bound by residues 13 to 20 and M39; that span reads GMSGGVDS. The segment at 99-101 is interaction with target base in tRNA; that stretch reads NPD. C104 acts as the Nucleophile in catalysis. A disulfide bond links C104 and C200. Position 128 (G128) interacts with ATP. Positions 150–152 are interaction with tRNA; sequence KDQ. Catalysis depends on C200, which acts as the Cysteine persulfide intermediate. Residues 308-309 form an interaction with tRNA region; it reads RY.

The protein belongs to the MnmA/TRMU family.

Its subcellular location is the cytoplasm. It carries out the reaction S-sulfanyl-L-cysteinyl-[protein] + uridine(34) in tRNA + AH2 + ATP = 2-thiouridine(34) in tRNA + L-cysteinyl-[protein] + A + AMP + diphosphate + H(+). In terms of biological role, catalyzes the 2-thiolation of uridine at the wobble position (U34) of tRNA, leading to the formation of s(2)U34. This Listeria monocytogenes serotype 4a (strain HCC23) protein is tRNA-specific 2-thiouridylase MnmA.